The chain runs to 252 residues: Pyrroloquinoline-quinone synthase (252 aa).

The protein belongs to the PqqC family.

It carries out the reaction 6-(2-amino-2-carboxyethyl)-7,8-dioxo-1,2,3,4,7,8-hexahydroquinoline-2,4-dicarboxylate + 3 O2 = pyrroloquinoline quinone + 2 H2O2 + 2 H2O + H(+). Its pathway is cofactor biosynthesis; pyrroloquinoline quinone biosynthesis. Its function is as follows. Ring cyclization and eight-electron oxidation of 3a-(2-amino-2-carboxyethyl)-4,5-dioxo-4,5,6,7,8,9-hexahydroquinoline-7,9-dicarboxylic-acid to PQQ. In Acinetobacter baumannii (strain ACICU), this protein is Pyrroloquinoline-quinone synthase.